Here is a 110-residue protein sequence, read N- to C-terminus: Large ribosomal subunit protein uL22 (110 aa).

The protein belongs to the universal ribosomal protein uL22 family. In terms of assembly, part of the 50S ribosomal subunit.

In terms of biological role, this protein binds specifically to 23S rRNA; its binding is stimulated by other ribosomal proteins, e.g. L4, L17, and L20. It is important during the early stages of 50S assembly. It makes multiple contacts with different domains of the 23S rRNA in the assembled 50S subunit and ribosome. Its function is as follows. The globular domain of the protein is located near the polypeptide exit tunnel on the outside of the subunit, while an extended beta-hairpin is found that lines the wall of the exit tunnel in the center of the 70S ribosome. The chain is Large ribosomal subunit protein uL22 from Aliivibrio fischeri (strain MJ11) (Vibrio fischeri).